Consider the following 518-residue polypeptide: Serine incorporator 4 (518 aa).

Transmembrane regions (helical) follow at residues 59–79 (CSRLFYILLHVGASAICCLLL), 122–142 (VCAGTATFHLLQAVLLVHLHS), 153–173 (SFWLLKLLFLLGLCAIAFCIP), 184–204 (IGICGGFAFILLQLVLITAFA), 222–242 (FLAVLLATLGFYSMAGVGAVL), 259–279 (LLSLHLCFCGLISFLSIAPCI), 286–306 (SGLLQASVISCYIMYLTFSAL), 338–357 (ISLAMLSASIMYACVLFACN), 427–447 (AFHFVFFLASLYVMVTLTNWF), and 470–490 (VASCWACVLLYLGLLLAPLCW).

It belongs to the TDE1 family.

The protein resides in the membrane. In terms of biological role, incorporates a polar amino acid serine into membranes and facilitates the synthesis of two serine-derived lipids, phosphatidylserine and sphingolipids. This Homo sapiens (Human) protein is Serine incorporator 4 (SERINC4).